Reading from the N-terminus, the 489-residue chain is Homoserine O-acetyltransferase (489 aa).

The AB hydrolase-1 domain occupies 69 to 438 (LLLCHALSGS…AEGHDGFLLE (370 aa)). Residue S163 is the Nucleophile of the active site. Positions 255–329 (ASRHPYPDRL…QTTDSSSLNQ (75 aa)) are disordered. Residues 280–290 (EGNRNRRERPC) are compositionally biased toward basic and acidic residues. Residues 299–329 (SESALNSPASSVSSLPSLGASQTTDSSSLNQ) show a composition bias toward low complexity. Residues D403 and H432 contribute to the active site.

The protein belongs to the AB hydrolase superfamily. MetX family.

Its subcellular location is the cytoplasm. It carries out the reaction L-homoserine + acetyl-CoA = O-acetyl-L-homoserine + CoA. The protein operates within amino-acid biosynthesis; L-methionine biosynthesis via de novo pathway; O-acetyl-L-homoserine from L-homoserine: step 1/1. In terms of biological role, commits homoserine to the methionine biosynthesis pathway by catalyzing its O-acetylation. This is Homoserine O-acetyltransferase (met6) from Schizosaccharomyces pombe (strain 972 / ATCC 24843) (Fission yeast).